The following is a 453-amino-acid chain: Presenilin-like protein At1g08700 (453 aa).

Topologically, residues 1–8 (MESSILDS) are cytoplasmic. Residues 9–29 (LGVEIIGVMAPVSICMFLVVL) traverse the membrane as a helical segment. The Lumenal portion of the chain corresponds to 30-68 (LTYSLSVTSDPQIRSAANLIYIENPSDSTTVKLEGSLAN). A helical membrane pass occupies residues 69–89 (AIVFVVLIAAVTFILVLLFYY). At 90 to 103 (NFTNFLKHYMRFSA) the chain is on the cytoplasmic side. A helical transmembrane segment spans residues 104-124 (FFVLGTMGGAIFLSIIQHFSI). At 125–132 (PVDSITCF) the chain is on the lumenal side. The chain crosses the membrane as a helical span at residues 133–153 (ILLFNFTILGTLSVFAGGIPI). The Cytoplasmic portion of the chain corresponds to 154–159 (VLRQCY). 2 helical membrane passes run 160-180 (MVVM…WTTW) and 181-201 (FILV…GGPL). Asp-190 is a catalytic residue. At 202 to 369 (KLLVELASSR…VVDISNRGIK (168 aa)) the chain is on the cytoplasmic side. 2 disordered regions span residues 226–248 (VSSG…GGGV) and 292–329 (IGNG…DRES). Positions 227–240 (SSGNQRRNRGSSLR) are enriched in low complexity. Phosphoserine is present on Ser-296. A compositionally biased stretch (polar residues) spans 309-320 (PSASEHSTSVGT). A helical membrane pass occupies residues 370 to 390 (LGLGDFIFYSVLVGRAAMYDL). Residue Asp-374 is part of the active site. The Lumenal portion of the chain corresponds to 391 to 392 (MT). Residues 393–413 (VYACYLAIISGLGCTLILLSV) traverse the membrane as a helical segment. Residues 414-417 (YNRA) are Cytoplasmic-facing. The segment at residues 418–438 (LPALPISIMLGVVFYFLTRLL) is an intramembrane region (helical). A PAL motif is present at residues 419–421 (PAL). Residues 439 to 453 (MEPFVVGVTTNLMMF) lie on the Cytoplasmic side of the membrane.

It belongs to the peptidase A22A family. As to quaternary structure, homodimer. Probable component of the gamma-secretase complex, a complex composed of a presenilin homodimer, nicastrin, APH1 and PEN2.

Its subcellular location is the endoplasmic reticulum membrane. It localises to the golgi apparatus membrane. In terms of biological role, probable subunit of the gamma-secretase complex, an endoprotease complex that catalyzes the intramembrane cleavage of integral membrane proteins such as Notch receptors. This is Presenilin-like protein At1g08700 from Arabidopsis thaliana (Mouse-ear cress).